The chain runs to 95 residues: uncharacterized protein (95 aa).

2 stretches are compositionally biased toward basic and acidic residues: residues 1-28 and 41-53; these read MRRA…KERC and DERV…KGRP. Positions 1-73 are disordered; the sequence is MRRAEVKRSA…RTSRAGSSWQ (73 aa).

This is an uncharacterized protein from Homo sapiens (Human).